We begin with the raw amino-acid sequence, 603 residues long: Bud site selection protein 8 (603 aa).

The segment covering 1–10 (MIQSDEDNLD) has biased composition (acidic residues). 3 disordered regions span residues 1 to 25 (MIQSDEDNLDSSETTASTSYSGTSS), 83 to 150 (ASTS…SPSS), and 190 to 212 (ANRGNDESKNGTPPRPTSIEPNE). Over 1 to 515 (MIQSDEDNLD…GFRDVYSIEN (515 aa)) the chain is Extracellular. Composition is skewed to low complexity over residues 11–25 (SSETTASTSYSGTSS) and 84–95 (STSSSSSSNSSS). N-linked (GlcNAc...) asparagine glycans are attached at residues asparagine 92, asparagine 110, asparagine 211, asparagine 240, asparagine 271, and asparagine 333. The span at 96–115 (ITQFHDTQDNNIPSNTTVRP) shows a compositional bias: polar residues. The disordered stretch occupies residues 286–479 (AGSIKSSTSD…NRKEDRHDAE (194 aa)). Residues 325–335 (PSHNSDSSNES) are compositionally biased toward low complexity. The segment covering 336 to 350 (SPKDHIGHNNEEKFS) has biased composition (basic and acidic residues). Asparagine 396 and asparagine 423 each carry an N-linked (GlcNAc...) asparagine glycan. Residues 439–452 (KSQSSESDTGQNSI) show a composition bias toward polar residues. Residues 463–479 (KQQEKTDNRKEDRHDAE) are compositionally biased toward basic and acidic residues. A helical transmembrane segment spans residues 516–536 (IIVILLCCSIVPPLFFIIGCS). Residues 537–577 (SRRKLVSDYRLMRLLMNKEHRAALLQGFIWDVDLRWFRMFC) are Cytoplasmic-facing. A helical membrane pass occupies residues 578 to 598 (LILGAAETVIVMAGIAIGFGV). At 599–603 (GITRE) the chain is on the extracellular side.

Belongs to the BUD8/9 family. In terms of assembly, interacts with RAX1 RAX2 at the proximal or distal pole in unbudded cells. Post-translationally, N- and O-glycosylated.

It is found in the cell membrane. It localises to the bud tip. Functionally, involved in positioning the distal bud pole signal. In Saccharomyces cerevisiae (strain ATCC 204508 / S288c) (Baker's yeast), this protein is Bud site selection protein 8.